Here is a 244-residue protein sequence, read N- to C-terminus: 14-3-3 protein beta/alpha-A (244 aa).

Residue M1 is modified to N-acetylmethionine.

Belongs to the 14-3-3 family. Homodimer, and heterodimer with other family members.

The protein localises to the cytoplasm. In terms of biological role, adapter protein implicated in the regulation of a large spectrum of both general and specialized signaling pathways. Binds to a large number of partners, usually by recognition of a phosphoserine or phosphothreonine motif. Binding generally results in the modulation of the activity of the binding partner. The protein is 14-3-3 protein beta/alpha-A (ywhab-a) of Xenopus laevis (African clawed frog).